The primary structure comprises 111 residues: Ribosome-binding factor A (111 aa).

The protein belongs to the RbfA family. As to quaternary structure, monomer. Binds 30S ribosomal subunits, but not 50S ribosomal subunits or 70S ribosomes.

The protein resides in the cytoplasm. Its function is as follows. One of several proteins that assist in the late maturation steps of the functional core of the 30S ribosomal subunit. Associates with free 30S ribosomal subunits (but not with 30S subunits that are part of 70S ribosomes or polysomes). Required for efficient processing of 16S rRNA. May interact with the 5'-terminal helix region of 16S rRNA. This Helicobacter pylori (strain HPAG1) protein is Ribosome-binding factor A.